The sequence spans 352 residues: Quinolinate synthase (352 aa).

H48 and S69 together coordinate iminosuccinate. A [4Fe-4S] cluster-binding site is contributed by C114. Iminosuccinate is bound by residues 140-142 (YAN) and S157. A [4Fe-4S] cluster-binding site is contributed by C201. Residues 227–229 (HPE) and T244 contribute to the iminosuccinate site. C298 lines the [4Fe-4S] cluster pocket.

The protein belongs to the quinolinate synthase family. Type 1 subfamily. [4Fe-4S] cluster serves as cofactor.

Its subcellular location is the cytoplasm. The enzyme catalyses iminosuccinate + dihydroxyacetone phosphate = quinolinate + phosphate + 2 H2O + H(+). Its pathway is cofactor biosynthesis; NAD(+) biosynthesis; quinolinate from iminoaspartate: step 1/1. Catalyzes the condensation of iminoaspartate with dihydroxyacetone phosphate to form quinolinate. In Pseudomonas putida (strain GB-1), this protein is Quinolinate synthase.